The primary structure comprises 87 residues: U3-theraphotoxin-Hhn1f (87 aa).

Positions 1-24 are cleaved as a signal peptide; sequence MVNMKASMFLTSAGLVLLFVVCYA. Positions 25–52 are excised as a propeptide; the sequence is SESEEKEFPKEMLSSIFAVDNDFKQEER. 3 disulfides stabilise this stretch: C54-C67, C61-C72, and C66-C79.

Belongs to the neurotoxin 10 (Hwtx-1) family. 51 (Hntx-8) subfamily. Hntx-8 sub-subfamily. In terms of tissue distribution, expressed by the venom gland.

The protein resides in the secreted. Its function is as follows. Ion channel inhibitor. This Cyriopagopus hainanus (Chinese bird spider) protein is U3-theraphotoxin-Hhn1f.